The primary structure comprises 165 residues: Large ribosomal subunit protein uL15 (165 aa).

A compositionally biased stretch (basic residues) spans 1–29; sequence MTSKKKRQRGSRTHGGGSHKNRRGAGHRG. Disordered stretches follow at residues 1-59 and 133-165; these read MTSK…QKVQ and KVEGAGGSVELTDLGEERQAEAEETEDADADEE. Positions 30–47 are enriched in basic and acidic residues; that stretch reads GRGDAGRDKHEFHNHEPL. A compositionally biased stretch (acidic residues) spans 154–165; that stretch reads AEETEDADADEE.

The protein belongs to the universal ribosomal protein uL15 family. Part of the 50S ribosomal subunit. Interacts weakly with proteins L18e and L32e.

In terms of biological role, binds to the 23S rRNA. The polypeptide is Large ribosomal subunit protein uL15 (rpl15) (Haloarcula marismortui (strain ATCC 43049 / DSM 3752 / JCM 8966 / VKM B-1809) (Halobacterium marismortui)).